The sequence spans 184 residues: ATP synthase subunit delta (184 aa).

Belongs to the ATPase delta chain family. F-type ATPases have 2 components, F(1) - the catalytic core - and F(0) - the membrane proton channel. F(1) has five subunits: alpha(3), beta(3), gamma(1), delta(1), epsilon(1). F(0) has three main subunits: a(1), b(2) and c(10-14). The alpha and beta chains form an alternating ring which encloses part of the gamma chain. F(1) is attached to F(0) by a central stalk formed by the gamma and epsilon chains, while a peripheral stalk is formed by the delta and b chains.

It localises to the cell inner membrane. Its function is as follows. F(1)F(0) ATP synthase produces ATP from ADP in the presence of a proton or sodium gradient. F-type ATPases consist of two structural domains, F(1) containing the extramembraneous catalytic core and F(0) containing the membrane proton channel, linked together by a central stalk and a peripheral stalk. During catalysis, ATP synthesis in the catalytic domain of F(1) is coupled via a rotary mechanism of the central stalk subunits to proton translocation. Functionally, this protein is part of the stalk that links CF(0) to CF(1). It either transmits conformational changes from CF(0) to CF(1) or is implicated in proton conduction. The polypeptide is ATP synthase subunit delta (Caulobacter vibrioides (strain NA1000 / CB15N) (Caulobacter crescentus)).